A 584-amino-acid polypeptide reads, in one-letter code: Arginine--tRNA ligase (584 aa).

A 'HIGH' region motif is present at residues 125-135 (PNIAKEMHVGH).

Belongs to the class-I aminoacyl-tRNA synthetase family. As to quaternary structure, monomer.

It localises to the cytoplasm. It catalyses the reaction tRNA(Arg) + L-arginine + ATP = L-arginyl-tRNA(Arg) + AMP + diphosphate. The polypeptide is Arginine--tRNA ligase (Thermosynechococcus vestitus (strain NIES-2133 / IAM M-273 / BP-1)).